The primary structure comprises 430 residues: GTPase Obg (430 aa).

An Obg domain is found at 1–158 (MFVDQVTISL…LDVTLELKLL (158 aa)). Positions 118 to 145 (RGGRGGRGNSRFATPRNPAPDFSENGEP) are disordered. The region spanning 159–329 (ADVGLVGFPS…LLYAIADKLD (171 aa)) is the OBG-type G domain. Residues 165 to 172 (GFPSVGKS), 190 to 194 (FTTIK), 212 to 215 (DLPG), 282 to 285 (NKMD), and 310 to 312 (STI) contribute to the GTP site. Mg(2+) contacts are provided by Ser172 and Thr192. In terms of domain architecture, OCT spans 352-430 (KHTPSQDKFT…ILGGEFEFVE (79 aa)).

Belongs to the TRAFAC class OBG-HflX-like GTPase superfamily. OBG GTPase family. In terms of assembly, monomer. Mg(2+) serves as cofactor.

The protein resides in the cytoplasm. Functionally, an essential GTPase which binds GTP, GDP and possibly (p)ppGpp with moderate affinity, with high nucleotide exchange rates and a fairly low GTP hydrolysis rate. Plays a role in control of the cell cycle, stress response, ribosome biogenesis and in those bacteria that undergo differentiation, in morphogenesis control. The sequence is that of GTPase Obg from Staphylococcus haemolyticus (strain JCSC1435).